Consider the following 663-residue polypeptide: UvrABC system protein B (663 aa).

The Helicase ATP-binding domain maps to 26-414 (DGLESGLAKQ…DNVAEQVVRP (389 aa)). 39-46 (GVTGSGKT) lines the ATP pocket. Positions 92-115 (YYDYYQPEAYVPASDTFIEKDASI) match the Beta-hairpin motif. The Helicase C-terminal domain occupies 430–596 (QVDDLMSEIR…GINKSVEDIL (167 aa)). A UVR domain is found at 624–659 (AKQINALEKQMYAHAQNMEFELAAKIRDEYLLLKEQ).

It belongs to the UvrB family. Forms a heterotetramer with UvrA during the search for lesions. Interacts with UvrC in an incision complex.

It is found in the cytoplasm. In terms of biological role, the UvrABC repair system catalyzes the recognition and processing of DNA lesions. A damage recognition complex composed of 2 UvrA and 2 UvrB subunits scans DNA for abnormalities. Upon binding of the UvrA(2)B(2) complex to a putative damaged site, the DNA wraps around one UvrB monomer. DNA wrap is dependent on ATP binding by UvrB and probably causes local melting of the DNA helix, facilitating insertion of UvrB beta-hairpin between the DNA strands. Then UvrB probes one DNA strand for the presence of a lesion. If a lesion is found the UvrA subunits dissociate and the UvrB-DNA preincision complex is formed. This complex is subsequently bound by UvrC and the second UvrB is released. If no lesion is found, the DNA wraps around the other UvrB subunit that will check the other stand for damage. This chain is UvrABC system protein B, found in Legionella pneumophila (strain Lens).